We begin with the raw amino-acid sequence, 221 residues long: Protein GrpE (221 aa).

The segment at 1–83 (MEQEQKATQE…AKNCRTRSED (83 aa)) is disordered. The segment covering 23-32 (QEEKAEERGG) has biased composition (basic and acidic residues). Positions 41-53 (ENLQQENTQAQQE) are enriched in low complexity.

Belongs to the GrpE family. As to quaternary structure, homodimer.

It is found in the cytoplasm. In terms of biological role, participates actively in the response to hyperosmotic and heat shock by preventing the aggregation of stress-denatured proteins, in association with DnaK and GrpE. It is the nucleotide exchange factor for DnaK and may function as a thermosensor. Unfolded proteins bind initially to DnaJ; upon interaction with the DnaJ-bound protein, DnaK hydrolyzes its bound ATP, resulting in the formation of a stable complex. GrpE releases ADP from DnaK; ATP binding to DnaK triggers the release of the substrate protein, thus completing the reaction cycle. Several rounds of ATP-dependent interactions between DnaJ, DnaK and GrpE are required for fully efficient folding. This is Protein GrpE from Geobacillus stearothermophilus (Bacillus stearothermophilus).